Reading from the N-terminus, the 310-residue chain is MKTLIRKFSRTAITVVLVILAFIAIFNAWVYYTESPWTRDARFSADVVAIAPDVSGLITQVNVHDNQLVKKGQILFTIDQPRYQKALEEAQADVAYYQVLAQEKRQEAGRRNRLGVQAMSREEIDQANNVLQTVLHQLAKAQATRDLAKLDLERTVIRAPADGWVTNLNVYTGEFITRGSTAVALVKQNSFYVLAYMEETKLEGVRPGYRAEITPLGSNKVLKGTVDSVAAGVTNASSTRDDKGMATIDSDLEWVRLAQRVPVRIRLDNQQENIWPAGTTATVVVTGKQDRDESQDSFFRKMAHRLREFG.

Residues Ala-12–Tyr-32 form a helical membrane-spanning segment.

Belongs to the membrane fusion protein (MFP) (TC 8.A.1) family.

The protein localises to the cell inner membrane. Its function is as follows. Forms an efflux pump with AaeB. This is p-hydroxybenzoic acid efflux pump subunit AaeA from Shigella flexneri.